The chain runs to 567 residues: Malate synthase, glyoxysomal (567 aa).

R182 serves as the catalytic Proton acceptor. Residue D468 is the Proton donor of the active site. The Microbody targeting signal motif lies at 565–567 (SRL).

The protein belongs to the malate synthase family.

It is found in the glyoxysome. It catalyses the reaction glyoxylate + acetyl-CoA + H2O = (S)-malate + CoA + H(+). It functions in the pathway carbohydrate metabolism; glyoxylate cycle; (S)-malate from isocitrate: step 2/2. The polypeptide is Malate synthase, glyoxysomal (Ricinus communis (Castor bean)).